We begin with the raw amino-acid sequence, 738 residues long: Glycogen [starch] synthase, muscle (738 aa).

Position 8 is a phosphoserine; by AMPK and PKA (serine 8). Serine 11 carries the phosphoserine modification. Lysine 39 is a binding site for UDP. Histidine 205 and arginine 211 together coordinate UDP-alpha-D-glucose. Positions 291, 292, 294, 297, and 301 each coordinate alpha-D-glucose 6-phosphate. Arginine 331 contributes to the UDP binding site. Arginine 331 is a UDP-alpha-D-glucose binding site. At serine 412 the chain carries Phosphoserine. Histidine 501 serves as a coordination point for alpha-D-glucose 6-phosphate. Glutamate 510, tryptophan 512, and glycine 513 together coordinate UDP-alpha-D-glucose. Position 515 (threonine 515) interacts with UDP. The alpha-D-glucose 6-phosphate site is built by arginine 582 and arginine 586. The interval 632–738 (QGYRYPRPAS…PTSSLGEERN (107 aa)) is disordered. Serine 641 and serine 645 each carry phosphoserine. Serine 649 is modified (phosphoserine; by GSK3-alpha and GSK3-beta). 4 positions are modified to phosphoserine: serine 652, serine 653, serine 657, and serine 672. A compositionally biased stretch (basic and acidic residues) spans 682–695 (AKDRRNIRAPEWPR). A phosphoserine mark is found at serine 698, serine 709, and serine 711. A compositionally biased stretch (low complexity) spans 698–738 (SCSSSTGGSKRSNSVDTGPSSSLSTPTEPLSPTSSLGEERN). Threonine 722 bears the Phosphothreonine mark. Phosphoserine occurs at positions 728 and 732.

It belongs to the glycosyltransferase 3 family. As to quaternary structure, part of the GYS1-GYG1 complex, a heterooctamer composed of a tetramer of GYS1 and 2 dimers of GYG1, where each GYS1 protomer binds to one GYG1 subunit (via GYG1 C-terminus); the GYS1 tetramer may dissociate from GYG1 dimers to continue glycogen polymerization on its own. In terms of processing, phosphorylation at Ser-8 by AMPK inactivates the enzyme activity. Primed phosphorylation at Ser-657 (site 5) by CSNK2A1 and CSNK2A2 is required for inhibitory phosphorylation at Ser-641 (site 3a), Ser-645 (site 3b), Ser-649 (site 3c) and Ser-653 (site 4) by GSK3A an GSK3B. Phosphorylated at Ser-641 by PASK, leading to inactivation; phosphorylation by PASK is inhibited by glycogen. Phosphorylated at Ser-641 by DYRK2, leading to inactivation. Dephosphorylation at Ser-641 and Ser-645 by PP1 activates the enzyme.

The catalysed reaction is [(1-&gt;4)-alpha-D-glucosyl](n) + UDP-alpha-D-glucose = [(1-&gt;4)-alpha-D-glucosyl](n+1) + UDP + H(+). Its pathway is glycan biosynthesis; glycogen biosynthesis. With respect to regulation, allosteric activation by glucose-6-phosphate. Phosphorylation reduces the activity towards UDP-glucose. When in the non-phosphorylated state, glycogen synthase does not require glucose-6-phosphate as an allosteric activator; when phosphorylated it does. Functionally, glycogen synthase participates in the glycogen biosynthetic process along with glycogenin and glycogen branching enzyme. Extends the primer composed of a few glucose units formed by glycogenin by adding new glucose units to it. In this context, glycogen synthase transfers the glycosyl residue from UDP-Glc to the non-reducing end of alpha-1,4-glucan. The chain is Glycogen [starch] synthase, muscle (Gys1) from Rattus norvegicus (Rat).